Consider the following 323-residue polypeptide: Transcription factor MYB56 (323 aa).

A compositionally biased stretch (basic and acidic residues) spans 1–14 (MNPNLLEKDLRGKE). A disordered region spans residues 1 to 84 (MNPNLLEKDL…EKSLRMRGKS (84 aa)). A compositionally biased stretch (polar residues) spans 27–60 (NFRSLPNSHTAACKTSLNNPSISRNHPHNKSASV). Residues 66 to 78 (EHGNERGENEKSL) are compositionally biased toward basic and acidic residues. HTH myb-type domains lie at 88–139 (TKVC…FNQL) and 140–194 (DPRI…ARRT). DNA-binding regions (H-T-H motif) lie at residues 116-138 (WNLISNHLLGRSGKSCRLRWFNQ) and 167-190 (WALISRLFPGRTDNAVKNHWHVIM). Positions 192–217 (RRTRESQRQRQQPPPTLSRDAEMTVS) are disordered.

Forms homodimer. Interacts with the dephosphorylated active form of BES1 in the nucleus of quiescent center (QC) cells. Interacts with BPM1, BPM2, BPM3, BPM4, BPM5 and BPM6 at the promoter of FLOWERING LOCUS T (FT). As to expression, mostly expressed in flowers (at protein level) and siliques, and, to a lower extent, in roots, stems and leaves. Expressed in embryos (e.g. heart and torpedo stages) and cotyledons, and, at low levels, in roots and inflorescence. Accumulates specifically in root apical meristem quiescent center (QC) and vascular initial cells.

The protein resides in the nucleus. Its subcellular location is the cytoplasm. It is found in the cytosol. Its function is as follows. Acts as a cell-specific local repressor of quiescent center (QC) self-renewal by cell divisions in the primary root. Counteracts brassinosteroid (BR)-mediated cell division in the QC cells. Regulates maternally seed size, especially before the heart stage, promoting both endothelial cells expansion and cell number in the outer integument layer of the seed coat. Modulates the expression of genes involved in cell wall metabolism such as cell division and expansion. Negative regulator of flowering via the repression of FT transcription. The polypeptide is Transcription factor MYB56 (Arabidopsis thaliana (Mouse-ear cress)).